The chain runs to 485 residues: Sulfated surface glycoprotein 185 (485 aa).

The first 20 residues, 1 to 20, serve as a signal peptide directing secretion; it reads MSKLLLVALFGAIAVVATSA. N193 is a glycosylation site (N-linked (GlcNAc...) asparagine). Residues 212-317 are disordered; that stretch reads LSGPNVNPIG…PPVPPPPSPP (106 aa). Pro residues-rich tracts occupy residues 221-234 and 241-317; these read GPAPNNSPLPPSPQ and PPSP…PSPP. N-linked (GlcNAc...) asparagine glycosylation is present at N347.

As to quaternary structure, polymer. Intersubunit cross-links are formed between saccharide chains rather than between polypeptide chains. Post-translationally, hydroxylated on proline residues in the Pro-rich central domain. In terms of processing, glycosylated; contains sulfate-substituted glycans.

In terms of biological role, the extracellular matrix (ECM) of Volvox contains insoluble fibrous layers that surround individual cells at a distance to form contiguous cellular compartments. SSG 185 is the monomeric precursor of this substructure (C3Z structure). The sequence is that of Sulfated surface glycoprotein 185 from Volvox carteri (Green alga).